Here is a 150-residue protein sequence, read N- to C-terminus: Profilin (150 aa).

Belongs to the profilin family. Occurs in many kinds of cells as a complex with monomeric actin in a 1:1 ratio.

It is found in the cytoplasm. The protein localises to the cytoskeleton. Binds to actin and affects the structure of the cytoskeleton. At high concentrations, profilin prevents the polymerization of actin, whereas it enhances it at low concentrations. By binding to PIP2, it inhibits the formation of IP3 and DG. The chain is Profilin from Trypanosoma brucei brucei.